Reading from the N-terminus, the 388-residue chain is 1-deoxy-D-xylulose 5-phosphate reductoisomerase (388 aa).

Thr13, Gly14, Ser15, Ile16, Arg40, Asn41, and Asn124 together coordinate NADPH. Lys125 is a 1-deoxy-D-xylulose 5-phosphate binding site. Glu126 serves as a coordination point for NADPH. A Mn(2+)-binding site is contributed by Asp150. The 1-deoxy-D-xylulose 5-phosphate site is built by Ser151, Glu152, Ser176, and His199. Glu152 is a binding site for Mn(2+). Gly205 serves as a coordination point for NADPH. 1-deoxy-D-xylulose 5-phosphate contacts are provided by Ser212, Asn217, Lys218, and Glu221. Glu221 lines the Mn(2+) pocket.

It belongs to the DXR family. Homodimer. Mg(2+) is required as a cofactor. The cofactor is Mn(2+). It depends on Co(2+) as a cofactor.

The catalysed reaction is 2-C-methyl-D-erythritol 4-phosphate + NADP(+) = 1-deoxy-D-xylulose 5-phosphate + NADPH + H(+). It participates in isoprenoid biosynthesis; isopentenyl diphosphate biosynthesis via DXP pathway; isopentenyl diphosphate from 1-deoxy-D-xylulose 5-phosphate: step 1/6. Its activity is regulated as follows. Competitively inhibited by the antibiotic fosmidomycin. In terms of biological role, catalyzes the NADPH-dependent rearrangement and reduction of 1-deoxy-D-xylulose-5-phosphate (DXP) to 2-C-methyl-D-erythritol 4-phosphate (MEP). Cannot use NADH instead of NADPH as the reducing agent. In Zymomonas mobilis subsp. mobilis (strain ATCC 31821 / ZM4 / CP4), this protein is 1-deoxy-D-xylulose 5-phosphate reductoisomerase.